Reading from the N-terminus, the 238-residue chain is Ribonuclease PH (238 aa).

Phosphate is bound by residues R86 and 124–126 (GTR).

This sequence belongs to the RNase PH family. As to quaternary structure, homohexameric ring arranged as a trimer of dimers.

The enzyme catalyses tRNA(n+1) + phosphate = tRNA(n) + a ribonucleoside 5'-diphosphate. Functionally, phosphorolytic 3'-5' exoribonuclease that plays an important role in tRNA 3'-end maturation. Removes nucleotide residues following the 3'-CCA terminus of tRNAs; can also add nucleotides to the ends of RNA molecules by using nucleoside diphosphates as substrates, but this may not be physiologically important. Probably plays a role in initiation of 16S rRNA degradation (leading to ribosome degradation) during starvation. The protein is Ribonuclease PH of Anaeromyxobacter sp. (strain Fw109-5).